The primary structure comprises 434 residues: 3-phosphoshikimate 1-carboxyvinyltransferase (434 aa).

Positions 22, 23, and 27 each coordinate 3-phosphoshikimate. Lys22 lines the phosphoenolpyruvate pocket. Positions 93 and 121 each coordinate phosphoenolpyruvate. Residues Ser168, Ser169, Gln170, Ser199, Asp320, and Lys347 each coordinate 3-phosphoshikimate. Residue Gln170 coordinates phosphoenolpyruvate. The Proton acceptor role is filled by Asp320. Phosphoenolpyruvate is bound by residues Arg351, Arg394, and Lys419.

It belongs to the EPSP synthase family. In terms of assembly, monomer.

The protein localises to the cytoplasm. The catalysed reaction is 3-phosphoshikimate + phosphoenolpyruvate = 5-O-(1-carboxyvinyl)-3-phosphoshikimate + phosphate. It functions in the pathway metabolic intermediate biosynthesis; chorismate biosynthesis; chorismate from D-erythrose 4-phosphate and phosphoenolpyruvate: step 6/7. Catalyzes the transfer of the enolpyruvyl moiety of phosphoenolpyruvate (PEP) to the 5-hydroxyl of shikimate-3-phosphate (S3P) to produce enolpyruvyl shikimate-3-phosphate and inorganic phosphate. The chain is 3-phosphoshikimate 1-carboxyvinyltransferase from Burkholderia multivorans (strain ATCC 17616 / 249).